A 236-amino-acid chain; its full sequence is Glyoxalase 3 (236 aa).

Residues Cys136, His137, and Glu168 contribute to the active site. Cys136 is modified (cysteine sulfinic acid (-SO2H)).

This sequence belongs to the peptidase C56 family. HSP31-like subfamily. In terms of assembly, monomer.

It catalyses the reaction methylglyoxal + H2O = (R)-lactate + H(+). Its function is as follows. Catalyzes the conversion of methylglyoxal (MG) to D-lactate in a single glutathione (GSH)-independent step. Selective for MG, does not use glyoxal as substrate. Plays a role in detoxifying endogenously produced MG, particularly when glycerol is the principal carbon source. Important for viability in stationary phase. The chain is Glyoxalase 3 from Candida albicans (strain SC5314 / ATCC MYA-2876) (Yeast).